Consider the following 507-residue polypeptide: Peroxisomal membrane protein PEX14 (507 aa).

Composition is skewed to polar residues over residues 1 to 10 (MATHQQTQPP) and 32 to 48 (EVQQATIAQDPPTSVFK). The segment at 1–52 (MATHQQTQPPSDFPALADENSQIPEATKPANEVQQATIAQDPPTSVFKNSEP) is disordered. Over 1–152 (MATHQQTQPP…QAAFLSRFRW (152 aa)) the chain is Peroxisomal. Involved in interaction with PEX5 stretches follow at residues 58 to 65 (IQNAIKFL) and 78 to 97 (RRSFLERKGLTKEEIDEAFR). Residues 153-173 (YHAILAVGVLAASGAGTAVFI) form a helical membrane-spanning segment. Residues 174-507 (KRSLIPRFKS…EQQHISQEGN (334 aa)) lie on the Cytoplasmic side of the membrane. Over residues 288–302 (VTTARKPYTNGSNVD) the composition is skewed to polar residues. Disordered regions lie at residues 288–329 (VTTA…PKSY), 344–394 (NIRE…NPRS), 409–435 (ANQNETSTMEPAAFQRQRSWVPPQPPP), and 448–507 (PKPQ…QEGN). The span at 308-322 (ARSASPPAAPADSSA) shows a compositional bias: low complexity. The span at 378-394 (QDESSNGQWWQQKNPRS) shows a compositional bias: polar residues.

The protein belongs to the peroxin-14 family. Interacts with PEX13; forming the PEX13-PEX14 docking complex. Interacts with PEX5 (via WxxxF/Y motifs). Expressed in flowers, siliques, leaves and roots.

It localises to the peroxisome membrane. Functionally, component of the PEX13-PEX14 docking complex, a translocon channel that specifically mediates the import of peroxisomal cargo proteins bound to PEX5 receptor. The PEX13-PEX14 docking complex forms a large import pore which can be opened to a diameter of about 9 nm. Mechanistically, PEX5 receptor along with cargo proteins associates with the PEX14 subunit of the PEX13-PEX14 docking complex in the cytosol, leading to the insertion of the receptor into the organelle membrane with the concomitant translocation of the cargo into the peroxisome matrix. The polypeptide is Peroxisomal membrane protein PEX14 (Arabidopsis thaliana (Mouse-ear cress)).